The chain runs to 60 residues: Large ribosomal subunit protein bL32 (60 aa).

Positions Met-1 to Thr-43 are disordered. The span at Arg-7–Arg-16 shows a compositional bias: basic residues.

It belongs to the bacterial ribosomal protein bL32 family.

The chain is Large ribosomal subunit protein bL32 from Saccharophagus degradans (strain 2-40 / ATCC 43961 / DSM 17024).